Reading from the N-terminus, the 78-residue chain is MSNKGQLLQDPFLNALRKEHVPVSIYLVNGIKLQGNIESFDQYVVLLRNTVTQMVYKHAISTVVPARPVNFHPDSESS.

Residues 10–69 (DPFLNALRKEHVPVSIYLVNGIKLQGNIESFDQYVVLLRNTVTQMVYKHAISTVVPARPV) enclose the Sm domain.

This sequence belongs to the Hfq family. As to quaternary structure, homohexamer.

RNA chaperone that binds small regulatory RNA (sRNAs) and mRNAs to facilitate mRNA translational regulation in response to envelope stress, environmental stress and changes in metabolite concentrations. Also binds with high specificity to tRNAs. This chain is RNA-binding protein Hfq, found in Paraburkholderia phymatum (strain DSM 17167 / CIP 108236 / LMG 21445 / STM815) (Burkholderia phymatum).